The sequence spans 484 residues: Pentatricopeptide repeat-containing protein At1g09190 (484 aa).

10 PPR repeats span residues N66–A100, D101–R135, L136–R166, N167–R197, S198–P232, D233–K267, F269–R299, N300–A334, N336–R366, and R372–A406. The tract at residues M407 to V482 is type E motif.

Belongs to the PPR family. PCMP-E subfamily.

The chain is Pentatricopeptide repeat-containing protein At1g09190 (PCMP-E70) from Arabidopsis thaliana (Mouse-ear cress).